We begin with the raw amino-acid sequence, 508 residues long: Probable cytosol aminopeptidase (508 aa).

Lys-274 and Asp-279 together coordinate Mn(2+). Lys-286 is an active-site residue. Mn(2+) contacts are provided by Asp-297, Asp-356, and Glu-358. Arg-360 is a catalytic residue.

Belongs to the peptidase M17 family. Requires Mn(2+) as cofactor.

It localises to the cytoplasm. The catalysed reaction is Release of an N-terminal amino acid, Xaa-|-Yaa-, in which Xaa is preferably Leu, but may be other amino acids including Pro although not Arg or Lys, and Yaa may be Pro. Amino acid amides and methyl esters are also readily hydrolyzed, but rates on arylamides are exceedingly low.. It carries out the reaction Release of an N-terminal amino acid, preferentially leucine, but not glutamic or aspartic acids.. Functionally, presumably involved in the processing and regular turnover of intracellular proteins. Catalyzes the removal of unsubstituted N-terminal amino acids from various peptides. The protein is Probable cytosol aminopeptidase of Paraburkholderia phytofirmans (strain DSM 17436 / LMG 22146 / PsJN) (Burkholderia phytofirmans).